The primary structure comprises 226 residues: 6-carboxyhexanoate--CoA ligase (226 aa).

Belongs to the BioW family. As to quaternary structure, homodimer. The cofactor is Mg(2+).

It catalyses the reaction heptanedioate + ATP + CoA = 6-carboxyhexanoyl-CoA + AMP + diphosphate. Its pathway is metabolic intermediate metabolism; pimeloyl-CoA biosynthesis; pimeloyl-CoA from pimelate: step 1/1. Its function is as follows. Catalyzes the transformation of pimelate into pimeloyl-CoA with concomitant hydrolysis of ATP to AMP. This Methanocaldococcus infernus (strain DSM 11812 / JCM 15783 / ME) protein is 6-carboxyhexanoate--CoA ligase.